Consider the following 110-residue polypeptide: MVNWAAVVDAFYVELFTAHPQYQDRFAFKGVALGDLKGNAAYQTQASKTVDYITAALAGSADAAGLASRHVGRNVGAPEFTHAKACLAKACAANGAPDLGGAVDAIISHF.

Residues 2–110 (VNWAAVVDAF…GAVDAIISHF (109 aa)) enclose the Globin domain. His-70 serves as a coordination point for heme.

This sequence belongs to the globin family. Homotetramer.

This is Body wall hemoglobin from Cerebratulus lacteus (Milky ribbon worm).